We begin with the raw amino-acid sequence, 495 residues long: GTPase Der (495 aa).

EngA-type G domains are found at residues 3-166 and 208-381; these read PVVA…VQDE and IKLA…SCAT. Residues 9–16, 56–60, 118–121, 214–221, 261–265, and 326–329 contribute to the GTP site; these read GRPNVGKS, DTGGI, NKTD, DTAGV, and NKWD. Residues 382–466 enclose the KH-like domain; sequence RRVSTAMLTR…PIRIQFKEGE (85 aa).

It belongs to the TRAFAC class TrmE-Era-EngA-EngB-Septin-like GTPase superfamily. EngA (Der) GTPase family. As to quaternary structure, associates with the 50S ribosomal subunit.

Functionally, GTPase that plays an essential role in the late steps of ribosome biogenesis. The polypeptide is GTPase Der (Pectobacterium atrosepticum (strain SCRI 1043 / ATCC BAA-672) (Erwinia carotovora subsp. atroseptica)).